Reading from the N-terminus, the 1485-residue chain is Glutamate receptor ionotropic, NMDA 2B (1485 aa).

The signal sequence occupies residues 1–26 (MKPRAECCSPKFWLVLAVLAVSGSRA). Residues 27–557 (RSQKSPPSIG…SAFLEPFSAD (531 aa)) lie on the Extracellular side of the membrane. Residue N74 is glycosylated (N-linked (GlcNAc...) asparagine). C86 and C321 form a disulfide bridge. Residues H127 and E284 each coordinate Zn(2+). N341, N348, N444, and N491 each carry an N-linked (GlcNAc...) asparagine glycan. Disulfide bonds link C429-C456 and C436-C457. Residues T514 and R519 each coordinate L-glutamate. N542 is a glycosylation site (N-linked (GlcNAc...) asparagine). Residues 558–576 (VWVMMFVMLLIVSAVAVFV) form a helical membrane-spanning segment. Topologically, residues 577 to 603 (FEYFSPVGYNRCLADGREPGGPSFTIG) are cytoplasmic. An intramembrane region (discontinuously helical) is located at residues 604–623 (KAIWLLWGLVFNNSVPVQNP). The pore-forming stretch occupies residues 604-623 (KAIWLLWGLVFNNSVPVQNP). The Cytoplasmic segment spans residues 624–630 (KGTTSKI). Residues 631 to 646 (MVSVWAFFAVIFLASY) traverse the membrane as a helical segment. The Extracellular segment spans residues 647–817 (TANLAAFMIQ…VMSSQLDIDN (171 aa)). N688 carries an N-linked (GlcNAc...) asparagine glycan. L-glutamate contacts are provided by residues 690–691 (ST) and D732. A disulfide bond links C746 and C801. Residues 818-837 (MAGVFYMLGAAMALSLITFI) traverse the membrane as a helical segment. At 838–1485 (CEHLFYWQFR…EKLSSIESDV (648 aa)) the chain is on the cytoplasmic side. Phosphoserine occurs at positions 882, 886, 917, and 920. 2 positions are modified to phosphotyrosine: Y962 and Y1039. 3 positions are modified to phosphoserine: S1058, S1061, and S1064. A disordered region spans residues 1074-1097 (EGNAAKRRKQQYKDSLKKRPASAK). Y1109 and Y1133 each carry phosphotyrosine. S1143 carries the post-translational modification Phosphoserine. The residue at position 1155 (Y1155) is a Phosphotyrosine. The disordered stretch occupies residues 1162–1194 (FKRDSVSGGGPCTNRSHLKHGAGDKHGVVSGVP). A phosphoserine mark is found at S1255 and S1259. A compositionally biased stretch (low complexity) spans 1269–1278 (PVAVPSNAPS). The segment at 1269–1302 (PVAVPSNAPSTKYPQSPTNSKAQKKTRNKLRRQH) is disordered. Residues 1280 to 1289 (KYPQSPTNSK) show a composition bias toward polar residues. The segment covering 1290 to 1301 (AQKKTRNKLRRQ) has biased composition (basic residues). An interaction with DAPK1 region spans residues 1292–1304 (KKTRNKLRRQHSY). S1303 bears the Phosphoserine; by DAPK1 mark. Y1475 carries the post-translational modification Phosphotyrosine. Residues 1483 to 1485 (SDV) carry the PDZ-binding motif.

It belongs to the glutamate-gated ion channel (TC 1.A.10.1) family. NR2B/GRIN2B subfamily. In terms of assembly, heterotetramer. Forms heterotetrameric channels composed of two GluN1/zeta subunits (GRIN1), and two identical GluN2/epsilon subunits (GRIN2A, GRIN2B, GRIN2C or GRIN2D) or GluN3 subunits (GRIN3A or GRIN3B) (in vitro). Can also form heterotetrameric channels that contain at least two GluN1 subunits and at least two different GluN2 subunits (or a combination of one GluN2 and one GluN3 subunits) (in vitro). In vivo, the subunit composition may depend on the expression levels of the different subunits. Found in a complex with GRIN1, GRIN3A and PPP2CB. Found in a complex with GRIN1 and GRIN3B. Interacts with MAGI3. Interacts with HIP1 and Neto1. Interacts with PDZ domains of PATJ, DLG3 and DLG4. Interacts with DAPK1. Found in a complex with GRIN1 and PRR7. Interacts with PRR7. Interacts with CAMK2A. Interacts with ARC; preventing ARC oligomerization. Interacts with TMEM25. Interacts (via the extreme C-terminus) with FRMPD2 (via the second PDZ domain); the interaction is direct and is likely to promote NMDAR-mediated neural signal transmission. Interacts with FAM81A; the interaction facilitates condensate formation via liquid-liquid phase separation. Post-translationally, phosphorylated on tyrosine residues. Phosphorylation at Ser-1303 by DAPK1 enhances synaptic NMDA receptor channel activity.

Its subcellular location is the cell membrane. It localises to the postsynaptic cell membrane. The protein localises to the cell projection. The protein resides in the dendrite. It is found in the late endosome. Its subcellular location is the lysosome. It localises to the cytoplasm. The protein localises to the cytoskeleton. It catalyses the reaction Ca(2+)(in) = Ca(2+)(out). The enzyme catalyses Na(+)(in) = Na(+)(out). It carries out the reaction K(+)(in) = K(+)(out). Functionally, component of N-methyl-D-aspartate (NMDA) receptors (NMDARs) that function as heterotetrameric, ligand-gated cation channels with high calcium permeability and voltage-dependent block by Mg(2+). Participates in synaptic plasticity for learning and memory formation by contributing to the long-term depression (LTD) of hippocampus membrane currents. Channel activation requires binding of the neurotransmitter L-glutamate to the GluN2 subunit, glycine or D-serine binding to the GluN1 subunit, plus membrane depolarization to eliminate channel inhibition by Mg(2+). NMDARs mediate simultaneously the potasium efflux and the influx of calcium and sodium. Each GluN2 subunit confers differential attributes to channel properties, including activation, deactivation and desensitization kinetics, pH sensitivity, Ca2(+) permeability, and binding to allosteric modulators. In concert with DAPK1 at extrasynaptic sites, acts as a central mediator for stroke damage. Its phosphorylation at Ser-1303 by DAPK1 enhances synaptic NMDA receptor channel activity inducing injurious Ca2+ influx through them, resulting in an irreversible neuronal death. The chain is Glutamate receptor ionotropic, NMDA 2B from Canis lupus familiaris (Dog).